Reading from the N-terminus, the 460-residue chain is Cysteine--tRNA ligase (460 aa).

Residue cysteine 28 coordinates Zn(2+). Positions methionine 30–histidine 40 match the 'HIGH' region motif. Zn(2+) contacts are provided by cysteine 209, histidine 234, and glutamate 238. The 'KMSKS' region motif lies at lysine 266 to serine 270. Residue lysine 269 participates in ATP binding.

The protein belongs to the class-I aminoacyl-tRNA synthetase family. In terms of assembly, monomer. Requires Zn(2+) as cofactor.

Its subcellular location is the cytoplasm. The enzyme catalyses tRNA(Cys) + L-cysteine + ATP = L-cysteinyl-tRNA(Cys) + AMP + diphosphate. The protein is Cysteine--tRNA ligase of Pseudomonas aeruginosa (strain LESB58).